The chain runs to 504 residues: Maturase K (504 aa).

Belongs to the intron maturase 2 family. MatK subfamily.

The protein localises to the plastid. The protein resides in the chloroplast. Its function is as follows. Usually encoded in the trnK tRNA gene intron. Probably assists in splicing its own and other chloroplast group II introns. This Cardamine amara (Large bitter-cress) protein is Maturase K.